We begin with the raw amino-acid sequence, 314 residues long: tRNA dimethylallyltransferase (314 aa).

36–43 (GPTASGKT) provides a ligand contact to ATP. Substrate is bound at residue 38-43 (TASGKT). The interval 61-64 (DSVQ) is interaction with substrate tRNA.

The protein belongs to the IPP transferase family. In terms of assembly, monomer. Requires Mg(2+) as cofactor.

It carries out the reaction adenosine(37) in tRNA + dimethylallyl diphosphate = N(6)-dimethylallyladenosine(37) in tRNA + diphosphate. In terms of biological role, catalyzes the transfer of a dimethylallyl group onto the adenine at position 37 in tRNAs that read codons beginning with uridine, leading to the formation of N6-(dimethylallyl)adenosine (i(6)A). The protein is tRNA dimethylallyltransferase of Sorangium cellulosum (strain So ce56) (Polyangium cellulosum (strain So ce56)).